Consider the following 553-residue polypeptide: Protein Early 65 kDa (553 aa).

Its subcellular location is the host cytoplasm. Its function is as follows. May participate in the recruitment of G-actin to the host nucleus. This chain is Protein Early 65 kDa (HE65), found in Autographa californica nuclear polyhedrosis virus (AcMNPV).